Here is a 463-residue protein sequence, read N- to C-terminus: Homoserine O-acetyltransferase FUB5 (463 aa).

One can recognise an AB hydrolase-1 domain in the interval 113-436; it reads NVMIICHALS…VSDDGHDAFL (324 aa). Residue serine 211 is the Nucleophile of the active site. The span at 296–312 shows a compositional bias: basic and acidic residues; that stretch reads RFGRDTGSKKKTQKQES. Residues 296-331 form a disordered region; the sequence is RFGRDTGSKKKTQKQESKTLPSNSTPIHSHSGADET. Active-site residues include aspartate 403 and histidine 432.

This sequence belongs to the AB hydrolase superfamily. MetX family.

The catalysed reaction is L-homoserine + acetyl-CoA = O-acetyl-L-homoserine + CoA. The protein operates within mycotoxin biosynthesis. In terms of biological role, homoserine O-acetyltransferase; part of the gene cluster that mediates the biosynthesis of fusaric acid, a mycotoxin with low to moderate toxicity to animals and humans, but with high phytotoxic properties. L-aspartate is suggested as fusaric acid amino acid precursor that is activated and further processed to O-acetyl-L-homoserine by cluster enzymes aspartate kinase FUB3 and homoserine O-acetyltransferase FUB5, as well as enzymes of the primary metabolism. The polyketide synthase (PKS) FUB1 generates the triketide trans-2-hexenal which is presumptively released by the hydrolase FUB4 and linked to the NRPS-bound amino acid precursor by NAD(P)-dependent dehydrogenase FUB6. FUB1, FUB4, and the non-canonical NRPS Fub8 may form an enzyme complex. Further processing of the NRPS-bound intermediate might be carried out by FUB6 and the sulfhydrylase FUB7, enabling a spontaneous electrocyclization to close the carbon backbone of fusaric acid. Dihydrofusaric acid is likely to be released via reduction by the thioester reductase (TR) domain of FUB8 whereupon the final oxidation to fusaric acid may (also) be performed by the FMN-dependent dehydrogenase FUB9. The polypeptide is Homoserine O-acetyltransferase FUB5 (Gibberella moniliformis (strain M3125 / FGSC 7600) (Maize ear and stalk rot fungus)).